We begin with the raw amino-acid sequence, 389 residues long: Large envelope protein (389 aa).

An N-acetylmethionine modification is found at M1. G2 carries N-myristoyl glycine; by host lipidation. The segment at 2-108 (GQNLSTSNPL…PPLRNTHPQA (107 aa)) is pre-S1. The interval 2 to 163 (GQNLSTSNPL…FSRIGDPALN (162 aa)) is pre-S. Topologically, residues 2–170 (GQNLSTSNPL…ALNMENITSG (169 aa)) are virion surface; in external conformation. The Intravirion; in internal conformation segment spans residues 2–242 (GQNLSTSNPL…PGYRWMCLRR (241 aa)). N37 carries an O-linked (GalNAc...) threonine glycan. A disordered region spans residues 76–103 (TLPANPPPASTNRQSGRQPTPLSPPLRN). Residues 85 to 95 (STNRQSGRQPT) are compositionally biased toward polar residues. A pre-S2 region spans residues 109–163 (MQWNSTTFHQTLQDPRVRGLYFPAGGSSSGTVNPVLTTASPLSSIFSRIGDPALN). The chain crosses the membrane as a helical span at residues 171–191 (FLGPLLVLQAGFFLLTRILTI). The Intravirion; in external conformation portion of the chain corresponds to 192–242 (PQSLDSWWTSLNFLGGTTVCLGQNSQSPTSNHSPTSCPPTCPGYRWMCLRR). The helical transmembrane segment at 243 to 263 (FIIFLFILLLCLIFLLVLLDY) threads the bilayer. Over 264 to 337 (QGMLPVCPLI…WASARFSWLS (74 aa)) the chain is Virion surface. The N-linked (GlcNAc...) asparagine; by host glycan is linked to N309. The chain crosses the membrane as a helical span at residues 338–358 (LLVPFVQWFVGLSPTVWLSVI). Over 359–364 (WMMWYW) the chain is Intravirion. Residues 365 to 387 (GPSLYSILSPFLPLLPIFFCLWV) form a helical membrane-spanning segment. Residues 388–389 (YI) are Virion surface-facing.

The protein belongs to the orthohepadnavirus major surface antigen family. In its internal form (Li-HBsAg), interacts with the capsid protein and with the isoform S. Interacts with host chaperone CANX. In terms of assembly, associates with host chaperone CANX through its pre-S2 N glycan; this association may be essential for isoform M proper secretion. As to quaternary structure, interacts with isoform L. Interacts with the antigens of satellite virus HDV (HDVAgs); this interaction is required for encapsidation of HDV genomic RNA. Post-translationally, isoform M is N-terminally acetylated by host at a ratio of 90%, and N-glycosylated by host at the pre-S2 region. In terms of processing, myristoylated.

It localises to the virion membrane. In terms of biological role, the large envelope protein exists in two topological conformations, one which is termed 'external' or Le-HBsAg and the other 'internal' or Li-HBsAg. In its external conformation the protein attaches the virus to cell receptors and thereby initiating infection. This interaction determines the species specificity and liver tropism. This attachment induces virion internalization predominantly through caveolin-mediated endocytosis. The large envelope protein also assures fusion between virion membrane and endosomal membrane. In its internal conformation the protein plays a role in virion morphogenesis and mediates the contact with the nucleocapsid like a matrix protein. Functionally, the middle envelope protein plays an important role in the budding of the virion. It is involved in the induction of budding in a nucleocapsid independent way. In this process the majority of envelope proteins bud to form subviral lipoprotein particles of 22 nm of diameter that do not contain a nucleocapsid. The chain is Large envelope protein from Homo sapiens (Human).